An 85-amino-acid polypeptide reads, in one-letter code: Small ribosomal subunit protein bS16 (85 aa).

It belongs to the bacterial ribosomal protein bS16 family.

In Acinetobacter baylyi (strain ATCC 33305 / BD413 / ADP1), this protein is Small ribosomal subunit protein bS16.